We begin with the raw amino-acid sequence, 571 residues long: 2-succinyl-5-enolpyruvyl-6-hydroxy-3-cyclohexene-1-carboxylate synthase (571 aa).

Belongs to the TPP enzyme family. MenD subfamily. In terms of assembly, homodimer. Requires Mg(2+) as cofactor. Mn(2+) is required as a cofactor. Thiamine diphosphate serves as cofactor.

It catalyses the reaction isochorismate + 2-oxoglutarate + H(+) = 5-enolpyruvoyl-6-hydroxy-2-succinyl-cyclohex-3-ene-1-carboxylate + CO2. The protein operates within quinol/quinone metabolism; 1,4-dihydroxy-2-naphthoate biosynthesis; 1,4-dihydroxy-2-naphthoate from chorismate: step 2/7. It functions in the pathway quinol/quinone metabolism; menaquinone biosynthesis. Catalyzes the thiamine diphosphate-dependent decarboxylation of 2-oxoglutarate and the subsequent addition of the resulting succinic semialdehyde-thiamine pyrophosphate anion to isochorismate to yield 2-succinyl-5-enolpyruvyl-6-hydroxy-3-cyclohexene-1-carboxylate (SEPHCHC). The protein is 2-succinyl-5-enolpyruvyl-6-hydroxy-3-cyclohexene-1-carboxylate synthase of Vibrio parahaemolyticus serotype O3:K6 (strain RIMD 2210633).